Reading from the N-terminus, the 314-residue chain is O-antigen chain rhamnosyltransferase RfbN (314 aa).

Belongs to the glycosyltransferase 2 family.

It carries out the reaction alpha-D-galactosyl-di-trans,octa-cis-undecaprenyl diphosphate + dTDP-beta-L-rhamnose = alpha-L-rhamnosyl-(1-&gt;3)-alpha-D-galactosyl-1-diphospho-di-trans,octa-cis-undecaprenol + dTDP + H(+). The protein operates within bacterial outer membrane biogenesis; LPS O-antigen biosynthesis. Its function is as follows. Rhamnosyltransferase involved in the biosynthesis of the repeat unit of the lipopolysaccharide (LPS) O-antigen region. Catalyzes the addition of a rhamnose to the galactosyl-undecaprenyl diphosphate intermediate. The chain is O-antigen chain rhamnosyltransferase RfbN from Salmonella typhimurium (strain LT2 / SGSC1412 / ATCC 700720).